Consider the following 296-residue polypeptide: Cytidine deaminase (296 aa).

CMP/dCMP-type deaminase domains lie at 47 to 167 (TEAE…FGPK) and 186 to 296 (DSSD…VDPV). 88–90 (NLE) provides a ligand contact to substrate. Histidine 101 contacts Zn(2+). Residue glutamate 103 is the Proton donor of the active site. Cysteine 128 and cysteine 131 together coordinate Zn(2+).

This sequence belongs to the cytidine and deoxycytidylate deaminase family. In terms of assembly, homodimer. The cofactor is Zn(2+).

It carries out the reaction cytidine + H2O + H(+) = uridine + NH4(+). The catalysed reaction is 2'-deoxycytidine + H2O + H(+) = 2'-deoxyuridine + NH4(+). Functionally, this enzyme scavenges exogenous and endogenous cytidine and 2'-deoxycytidine for UMP synthesis. This is Cytidine deaminase from Shewanella sp. (strain W3-18-1).